Consider the following 370-residue polypeptide: Aminomethyltransferase (370 aa).

This sequence belongs to the GcvT family. In terms of assembly, the glycine cleavage system is composed of four proteins: P, T, L and H.

It carries out the reaction N(6)-[(R)-S(8)-aminomethyldihydrolipoyl]-L-lysyl-[protein] + (6S)-5,6,7,8-tetrahydrofolate = N(6)-[(R)-dihydrolipoyl]-L-lysyl-[protein] + (6R)-5,10-methylene-5,6,7,8-tetrahydrofolate + NH4(+). Its function is as follows. The glycine cleavage system catalyzes the degradation of glycine. The sequence is that of Aminomethyltransferase from Prochlorococcus marinus (strain MIT 9301).